The sequence spans 572 residues: Hemolysin-1 (572 aa).

Its function is as follows. Bacterial hemolysins are exotoxins that attack blood cell membranes and cause cell rupture by mechanisms not clearly defined. In Aeromonas salmonicida, this protein is Hemolysin-1 (ash1).